We begin with the raw amino-acid sequence, 210 residues long: Na(+)-translocating NADH-quinone reductase subunit D (210 aa).

The next 5 membrane-spanning stretches (helical) occupy residues 42–62 (FVMT…VSLI), 72–92 (IIVQ…VLKA), 103–123 (VFVG…AFAM), 131–151 (LIDG…VGFF), and 178–198 (NGLM…IWVI).

It belongs to the NqrDE/RnfAE family. As to quaternary structure, composed of six subunits; NqrA, NqrB, NqrC, NqrD, NqrE and NqrF.

The protein localises to the cell inner membrane. It catalyses the reaction a ubiquinone + n Na(+)(in) + NADH + H(+) = a ubiquinol + n Na(+)(out) + NAD(+). NQR complex catalyzes the reduction of ubiquinone-1 to ubiquinol by two successive reactions, coupled with the transport of Na(+) ions from the cytoplasm to the periplasm. NqrA to NqrE are probably involved in the second step, the conversion of ubisemiquinone to ubiquinol. This chain is Na(+)-translocating NADH-quinone reductase subunit D, found in Vibrio parahaemolyticus serotype O3:K6 (strain RIMD 2210633).